Reading from the N-terminus, the 1669-residue chain is Formin-like protein 12 (1669 aa).

The Phosphatase tensin-type domain maps to 5–193 (RRLFYRKPPD…QYICKMDDEL (189 aa)). C126 acts as the Phosphocysteine intermediate in catalysis. In terms of domain architecture, C2 tensin-type spans 199 to 338 (PIPFTLDCVI…FKAEVLFSEF (140 aa)). Disordered stretches follow at residues 688-709 (QGSS…DANE), 1025-1240 (DAGP…GHGL), and 1631-1669 (IEAD…SPFK). Residues 1036–1050 (LEWKRCPHHPPERPH) show a composition bias toward basic and acidic residues. 4 stretches are compositionally biased toward pro residues: residues 1060 to 1069 (PSPPSPPPPQ), 1098 to 1127 (APPP…PPPI), 1136 to 1190 (PPAP…PPPR), and 1198 to 1230 (PPTP…PAPP). One can recognise an FH2 domain in the interval 1247 to 1646 (NSAATARRST…KAQKEAEKEA (400 aa)).

Belongs to the formin-like family. Class-II subfamily.

The sequence is that of Formin-like protein 12 (FH12) from Oryza sativa subsp. japonica (Rice).